The primary structure comprises 154 residues: Large ribosomal subunit protein uL13 (154 aa).

The protein belongs to the universal ribosomal protein uL13 family. Part of the 50S ribosomal subunit.

In terms of biological role, this protein is one of the early assembly proteins of the 50S ribosomal subunit, although it is not seen to bind rRNA by itself. It is important during the early stages of 50S assembly. The sequence is that of Large ribosomal subunit protein uL13 from Agrobacterium fabrum (strain C58 / ATCC 33970) (Agrobacterium tumefaciens (strain C58)).